Here is a 73-residue protein sequence, read N- to C-terminus: Dermaseptin-1 (73 aa).

Residues 1–22 (MAFLKKSIFLALFLGMVSLSIC) form the signal peptide. Residues 23–43 (EEEKRENEGEEEQEDDEQSEM) constitute a propeptide, removed in mature form. Positions 25–46 (EKRENEGEEEQEDDEQSEMKRG) are disordered. The span at 30–40 (EGEEEQEDDEQ) shows a compositional bias: acidic residues. L70 carries the leucine amide modification. Residues 72–73 (EQ) constitute a propeptide, removed in mature form.

Expressed by the skin glands.

It localises to the secreted. In terms of biological role, has antiparasitic activity against trypomastigote form of T.cruzi (IC(50)=0.68 uM) in vitro but not against L.infantum. Probably acts by permeabilizing cell membranes. In vitro, shows no cytotoxicity against macrophages. Has antibacterial activity. The protein is Dermaseptin-1 of Pithecopus nordestinus (Northeastern Brazilian leaf frog).